The chain runs to 508 residues: GMP synthase [glutamine-hydrolyzing] (508 aa).

Positions 1 to 189 (MILVLDFGSQ…ALLVCGCEKT (189 aa)) constitute a Glutamine amidotransferase type-1 domain. Catalysis depends on C78, which acts as the Nucleophile. Active-site residues include H163 and E165. In terms of domain architecture, GMPS ATP-PPase spans 190-383 (WGMQHFAQRE…LGVSQDFLMR (194 aa)). Residue 217 to 223 (SGGVDST) participates in ATP binding.

Homodimer.

It carries out the reaction XMP + L-glutamine + ATP + H2O = GMP + L-glutamate + AMP + diphosphate + 2 H(+). It participates in purine metabolism; GMP biosynthesis; GMP from XMP (L-Gln route): step 1/1. Its function is as follows. Catalyzes the synthesis of GMP from XMP. This Helicobacter pylori (strain J99 / ATCC 700824) (Campylobacter pylori J99) protein is GMP synthase [glutamine-hydrolyzing] (guaA).